The following is a 444-amino-acid chain: Cop9 signalosome complex subunit 11 (444 aa).

In terms of domain architecture, PCI spans 195 to 367 (FFTMMTSEPL…IHFEDSSILQ (173 aa)). The tract at residues 419-439 (SSDDMDIDEVNDRSDISDSEG) is disordered.

Component of a COP9 signalosome-like (CSN) complex, composed of RRI1/CSN5, CSN9, RRI2/CSN10, PCI8/CSN11, CSN12 and CSI1. Interacts with PRT1 and RPG1, 2 subunits of the core complex of translation initiation factor 3 (eIF3).

Its subcellular location is the cytoplasm. The protein localises to the nucleus. In terms of biological role, component of the COP9 signalosome (CSN) complex that acts as an regulator of the ubiquitin (Ubl) conjugation pathway by mediating the deneddylation of the cullin subunit of SCF-type E3 ubiquitin-protein ligase complexes The CSN complex is involved in the regulation of the mating pheromone response. PCI8 may also be involved in transcriptional and translational control. In Saccharomyces cerevisiae (strain ATCC 204508 / S288c) (Baker's yeast), this protein is Cop9 signalosome complex subunit 11 (PCI8).